The following is a 67-amino-acid chain: Large ribosomal subunit protein bL32 (67 aa).

The span at methionine 1–glutamine 19 shows a compositional bias: basic residues. The disordered stretch occupies residues methionine 1–lysine 21.

This sequence belongs to the bacterial ribosomal protein bL32 family.

The sequence is that of Large ribosomal subunit protein bL32 from Micrococcus luteus (strain ATCC 4698 / DSM 20030 / JCM 1464 / CCM 169 / CCUG 5858 / IAM 1056 / NBRC 3333 / NCIMB 9278 / NCTC 2665 / VKM Ac-2230) (Micrococcus lysodeikticus).